The chain runs to 440 residues: Cytochrome P450 monooygenase 1 (440 aa).

Cys381 provides a ligand contact to heme.

It belongs to the cytochrome P450 family. Requires heme as cofactor.

The protein operates within plant hormone biosynthesis; gibberellin biosynthesis. GA14 synthase; part of the gene cluster that mediates the biosynthesis of gibberellins (GAs), diterpenoids that may provide a selective advantage during infection of the preferred host plant, rice. Gibberellins (GAs) are diterpenoids and are synthesized via the mevalonate pathway. Biosynthesis of the major metabolite GA3 (gibberellic acid) from geranylgeranyl diphosphate (GGPP) requires 13 steps. The GGPP produced by the geranylgeranyl diphosphate synthase GGS2 is converted to ent-kaurene via ent-copalyldiphosphate in a two-step cyclization reaction performed by the bifunctional ent-copalyl diphosphate synthase/ent-kaurene synthase enzyme (CPS/KS). Ent-Kaurene is metabolized to GAs by a series of oxidation reactions catalyzed by cytochrome P450 monooxygenases. Cytochrome P450 monooxygenase P450-4 is an ent-kaurene oxidase that catalyzes the three oxidation steps between ent-kaurene and ent-kaurenoic acid. The highly multifunctional cytochrome P450 monooxygenase P450-1 then catalyzes four steps involving oxidation at two carbon atoms, in the main pathway from ent-kaurenoic acid to GA14 via GA12-aldehyde as well as producing kaurenolides and fujenoic acids as by-products. The cytochrome P450 monooxygenase P450-2 then converts GA14 to GA4 by removal of C-20. GA4 is further converted to GA7 by the GA4 desaturase DES via 1,2-desaturation before cytochrome P450 monooxygenase P450-3, a 13-hydroxylase, hydroxylates GA7 to GA3, the final product of the GA-biosynthetic pathway. This chain is Cytochrome P450 monooygenase 1, found in Gibberella fujikuroi (strain CBS 195.34 / IMI 58289 / NRRL A-6831) (Bakanae and foot rot disease fungus).